The sequence spans 110 residues: NADH-quinone oxidoreductase subunit K (110 aa).

The next 3 membrane-spanning stretches (helical) occupy residues 13–33 (VTHG…GIII), 38–58 (ILIL…NFLI), and 70–90 (VFVF…LAIV).

The protein belongs to the complex I subunit 4L family. As to quaternary structure, NDH-1 is composed of 14 different subunits. Subunits NuoA, H, J, K, L, M, N constitute the membrane sector of the complex.

It is found in the cell inner membrane. The enzyme catalyses a quinone + NADH + 5 H(+)(in) = a quinol + NAD(+) + 4 H(+)(out). Functionally, NDH-1 shuttles electrons from NADH, via FMN and iron-sulfur (Fe-S) centers, to quinones in the respiratory chain. The immediate electron acceptor for the enzyme in this species is believed to be ubiquinone. Couples the redox reaction to proton translocation (for every two electrons transferred, four hydrogen ions are translocated across the cytoplasmic membrane), and thus conserves the redox energy in a proton gradient. This is NADH-quinone oxidoreductase subunit K from Francisella tularensis subsp. tularensis (strain FSC 198).